Reading from the N-terminus, the 468-residue chain is E3 ubiquitin-protein ligase TRIM11 (468 aa).

Residues 16–57 form an RING-type zinc finger; that stretch reads CAICLDYFTDPVMTDCGHNFCRECIRRCWGQPEGPYACPECR. Ser-85 is subject to Phosphoserine. The B box-type zinc finger occupies 87–128; sequence VPQGVCAAHREPLAAFCGDELRLLCAACERSGEHWAHRVRPL. Zn(2+)-binding residues include Cys-92, His-95, Cys-114, and His-120. Residues 128 to 233 adopt a coiled-coil conformation; that stretch reads LQDAAEDLKS…QLAELITELE (106 aa). In terms of domain architecture, B30.2/SPRY spans 268-461; sequence EMRTVCRVPG…MTICRLKGGP (194 aa). Lys-458 is covalently cross-linked (Glycyl lysine isopeptide (Lys-Gly) (interchain with G-Cter in ubiquitin)).

The protein belongs to the TRIM/RBCC family. As to quaternary structure, binds cytoplasmic tail of integrin alpha-1. Interacts with the HN peptide. Interacts with PHOX2B. Interacts (when autoubiquitinated) with SQSTM1/p62; promoting AIM2 recruitment to autophagosomes. Interacts with AIM2; promoting its autophagy-dependent degradation. Post-translationally, autoubiquitinated upon DNA stimulation; autoubiquitination promotes interaction with SQSTM1/p62 and recruitment of AIM2 to autophagosomes.

The protein localises to the cytoplasm. It localises to the nucleus. It catalyses the reaction S-ubiquitinyl-[E2 ubiquitin-conjugating enzyme]-L-cysteine + [acceptor protein]-L-lysine = [E2 ubiquitin-conjugating enzyme]-L-cysteine + N(6)-ubiquitinyl-[acceptor protein]-L-lysine.. Its pathway is protein modification; protein ubiquitination. E3 ubiquitin-protein ligase that promotes the degradation of insoluble ubiquitinated proteins, including insoluble PAX6, poly-Gln repeat expanded HTT and poly-Ala repeat expanded ARX. Mediates PAX6 ubiquitination leading to proteasomal degradation, thereby modulating cortical neurogenesis. May also inhibit PAX6 transcriptional activity, possibly in part by preventing the binding of PAX6 to its consensus sequences. May contribute to the regulation of the intracellular level of HN (humanin) or HN-containing proteins through the proteasomal degradation pathway. Mediates MED15 ubiquitination leading to proteasomal degradation. May contribute to the innate restriction of retroviruses. Upon overexpression, reduces HIV-1 and murine leukemia virus infectivity, by suppressing viral gene expression. Antiviral activity depends on a functional E3 ubiquitin-protein ligase domain. May regulate TRIM5 turnover via the proteasome pathway, thus counteracting the TRIM5-mediated cross-species restriction of retroviral infection at early stages of the retroviral life cycle. Acts as an inhibitor of the AIM2 inflammasome by promoting autophagy-dependent degradation of AIM2. Mechanistically, undergoes autoubiquitination upon DNA stimulation, promoting interaction with AIM2 and SQSTM1/p62, leading to AIM2 recruitment to autophagosomes. In Bos taurus (Bovine), this protein is E3 ubiquitin-protein ligase TRIM11 (TRIM11).